Here is a 337-residue protein sequence, read N- to C-terminus: 1-aminocyclopropane-1-carboxylate deaminase (337 aa).

An N6-(pyridoxal phosphate)lysine modification is found at lysine 50. The Nucleophile role is filled by serine 77.

This sequence belongs to the ACC deaminase/D-cysteine desulfhydrase family. In terms of assembly, homotrimer. Pyridoxal 5'-phosphate is required as a cofactor.

The enzyme catalyses 1-aminocyclopropane-1-carboxylate + H2O = 2-oxobutanoate + NH4(+). Its function is as follows. Catalyzes a cyclopropane ring-opening reaction, the irreversible conversion of 1-aminocyclopropane-1-carboxylate (ACC) to ammonia and alpha-ketobutyrate. Allows growth on ACC as a nitrogen source. The polypeptide is 1-aminocyclopropane-1-carboxylate deaminase (Rhizobium rhizogenes (strain K84 / ATCC BAA-868) (Agrobacterium radiobacter)).